We begin with the raw amino-acid sequence, 385 residues long: Pre-mRNA-splicing factor slt-11 (385 aa).

The segment at 157 to 233 (RKGREVDEEG…PPGPKDWLPP (77 aa)) is disordered. Residues 171-187 (GSSSGAGRATGGNPAVG) show a composition bias toward low complexity. The region spanning 239–312 (MSLFVTGIED…CPLRVRWSVP (74 aa)) is the RRM domain. Residues 320-331 (KEQRSEMLRDGR) are compositionally biased toward basic and acidic residues. Positions 320 to 370 (KEQRSEMLRDGRSAFGSGQKTGGQKAIGGQNAQGGASGAQKDDASNLTIAA) are disordered.

It belongs to the SLT11 family. Associated with the spliceosome.

It localises to the nucleus. Its function is as follows. Involved in pre-mRNA splicing. Facilitates the cooperative formation of U2/U6 helix II in association with stem II in the spliceosome. Binds to RNA. The sequence is that of Pre-mRNA-splicing factor slt-11 (slt-11) from Neurospora crassa (strain ATCC 24698 / 74-OR23-1A / CBS 708.71 / DSM 1257 / FGSC 987).